The sequence spans 249 residues: Triosephosphate isomerase (249 aa).

Residue 9–11 (NWK) coordinates substrate. Residue H95 is the Electrophile of the active site. E166 functions as the Proton acceptor in the catalytic mechanism. Residues G172, S211, and 232–233 (GG) each bind substrate.

It belongs to the triosephosphate isomerase family. In terms of assembly, homodimer.

The protein localises to the cytoplasm. It carries out the reaction D-glyceraldehyde 3-phosphate = dihydroxyacetone phosphate. Its pathway is carbohydrate biosynthesis; gluconeogenesis. It participates in carbohydrate degradation; glycolysis; D-glyceraldehyde 3-phosphate from glycerone phosphate: step 1/1. In terms of biological role, involved in the gluconeogenesis. Catalyzes stereospecifically the conversion of dihydroxyacetone phosphate (DHAP) to D-glyceraldehyde-3-phosphate (G3P). This is Triosephosphate isomerase from Legionella pneumophila (strain Lens).